Consider the following 298-residue polypeptide: D-alanine--D-alanine ligase (298 aa).

Positions 97 to 290 (FYSLFKNYIQ…FDELINIIIK (194 aa)) constitute an ATP-grasp domain. 124-173 (PFIIKPRKSGSSKGVYIIHNENEYKFYLEKDLKEFQEVLVQEYIKGREIT) serves as a coordination point for ATP. The Mg(2+) site is built by Asp245, Glu257, and Asn259.

It belongs to the D-alanine--D-alanine ligase family. Requires Mg(2+) as cofactor. The cofactor is Mn(2+).

It is found in the cytoplasm. The enzyme catalyses 2 D-alanine + ATP = D-alanyl-D-alanine + ADP + phosphate + H(+). The protein operates within cell wall biogenesis; peptidoglycan biosynthesis. Its function is as follows. Cell wall formation. This chain is D-alanine--D-alanine ligase, found in Petrotoga mobilis (strain DSM 10674 / SJ95).